A 462-amino-acid chain; its full sequence is Steroidogenic factor 1 (462 aa).

Positions 10 to 85 (DELCPVCGDK…VGMRLEAVRA (76 aa)) form a DNA-binding region, nuclear receptor. The NR C4-type zinc-finger motif lies at 13–33 (CPVCGDKVSGYHYGLLTCESC). 3 positions are modified to N6-acetyllysine: K34, K38, and K72. The NR C4-type zinc finger occupies 49-73 (CTESQSCKIDKTQRKRCPFCRFQKC). The interval 117–149 (GFKLETGPPMGVPPPPPPPPDYMLPPSLHAPEP) is disordered. K119 participates in a covalent cross-link: Glycyl lysine isopeptide (Lys-Gly) (interchain with G-Cter in SUMO). Over residues 126–139 (MGVPPPPPPPPDYM) the composition is skewed to pro residues. K194 participates in a covalent cross-link: Glycyl lysine isopeptide (Lys-Gly) (interchain with G-Cter in SUMO). S203 bears the Phosphoserine; by CDK7 mark. The 238-residue stretch at 223–460 (NVPELILQLL…NLLIEMLQAK (238 aa)) folds into the NR LBD domain. G342, Y437, and K441 together coordinate a 1,2-diacyl-sn-glycero-3-phosphocholine.

This sequence belongs to the nuclear hormone receptor family. NR5 subfamily. Binds DNA as a monomer. Part of a complex consisting of SFPQ, NONO and NR5A1. Interacts with NR0B2, NCOA2 and PPARGC1A. Interacts with DGKQ and CDK7. Binds to and activated by HIPK3. Post-translationally, acetylation stimulates the transcriptional activity. In terms of processing, sumoylation reduces CDK7-mediated phosphorylation on Ser-203. Phosphorylated on Ser-203 by CDK7. This phosphorylation promotes transcriptional activity.

The protein localises to the nucleus. In terms of biological role, transcriptional activator. Seems to be essential for sexual differentiation and formation of the primary steroidogenic tissues. Binds to the Ad4 site found in the promoter region of steroidogenic P450 genes such as CYP11A, CYP11B and CYP21B. Also regulates the AMH/Muellerian inhibiting substance gene as well as the AHCH and STAR genes. 5'-YCAAGGYC-3' and 5'-RRAGGTCA-3' are the consensus sequences for the recognition by NR5A1. The SFPQ-NONO-NR5A1 complex binds to the CYP17 promoter and regulates basal and cAMP-dependent transcriptional activity. Binds phosphatidylcholine and phospholipids with a phosphatidylinositol (PI) headgroup, in particular PI(3,4)P2 and PI(3,4,5)P3. Activated by the phosphorylation of NR5A1 by HIPK3 leading to increased steroidogenic gene expression upon cAMP signaling pathway stimulation. In Rattus norvegicus (Rat), this protein is Steroidogenic factor 1 (Nr5a1).